Consider the following 224-residue polypeptide: Ribose-5-phosphate isomerase A (224 aa).

Substrate is bound by residues 26 to 29 (TGST), 81 to 84 (DGAD), and 94 to 97 (KGGG). The active-site Proton acceptor is E103. K121 is a substrate binding site.

It belongs to the ribose 5-phosphate isomerase family. Homodimer.

It carries out the reaction aldehydo-D-ribose 5-phosphate = D-ribulose 5-phosphate. The protein operates within carbohydrate degradation; pentose phosphate pathway; D-ribose 5-phosphate from D-ribulose 5-phosphate (non-oxidative stage): step 1/1. Catalyzes the reversible conversion of ribose-5-phosphate to ribulose 5-phosphate. The chain is Ribose-5-phosphate isomerase A from Listeria innocua serovar 6a (strain ATCC BAA-680 / CLIP 11262).